Here is a 717-residue protein sequence, read N- to C-terminus: Transport/processing ATP-binding protein ComA (717 aa).

The 128-residue stretch at 11 to 138 (QVDQMDCGVA…EEWTGVTLFM (128 aa)) folds into the Peptidase C39 domain. Residue Cys17 is part of the active site. Transmembrane regions (helical) follow at residues 18–38 (GVAS…LAHL), 166–186 (GLIA…IVGS), 205–225 (LGII…LSYA), 237–257 (LSID…MSFF), 281–301 (STIL…LVLF), 306–326 (NLFF…FAFM), and 397–417 (VAHL…VMDG). One can recognise an ABC transmembrane type-1 domain in the interval 168–450 (IANIVLATLL…IINLQTKLQT (283 aa)). The ABC transporter domain maps to 484–717 (MTFKQVHYKY…GGFYAHLVNS (234 aa)). ATP is bound at residue 517 to 524 (GISGSGKT).

It belongs to the ABC transporter superfamily. HlyB family.

It localises to the cell membrane. In terms of biological role, required for induction of competence. Seems to transport the competence-stimulating peptide (CSP). This is Transport/processing ATP-binding protein ComA (comA) from Streptococcus pneumoniae (strain ATCC BAA-255 / R6).